A 263-amino-acid polypeptide reads, in one-letter code: 3-deoxy-manno-octulosonate cytidylyltransferase 2 (263 aa).

The protein belongs to the KdsB family.

The protein localises to the cytoplasm. The enzyme catalyses 3-deoxy-alpha-D-manno-oct-2-ulosonate + CTP = CMP-3-deoxy-beta-D-manno-octulosonate + diphosphate. It participates in nucleotide-sugar biosynthesis; CMP-3-deoxy-D-manno-octulosonate biosynthesis; CMP-3-deoxy-D-manno-octulosonate from 3-deoxy-D-manno-octulosonate and CTP: step 1/1. The protein operates within bacterial outer membrane biogenesis; lipopolysaccharide biosynthesis. In terms of biological role, activates KDO (a required 8-carbon sugar) for incorporation into bacterial lipopolysaccharide in Gram-negative bacteria. The sequence is that of 3-deoxy-manno-octulosonate cytidylyltransferase 2 from Paraburkholderia phytofirmans (strain DSM 17436 / LMG 22146 / PsJN) (Burkholderia phytofirmans).